The following is a 208-amino-acid chain: Dephospho-CoA kinase (208 aa).

The 197-residue stretch at 11–207 (VIGLTGGIAS…EYYLELAQHD (197 aa)) folds into the DPCK domain. 19 to 24 (ASGKSA) provides a ligand contact to ATP.

It belongs to the CoaE family.

Its subcellular location is the cytoplasm. It carries out the reaction 3'-dephospho-CoA + ATP = ADP + CoA + H(+). The protein operates within cofactor biosynthesis; coenzyme A biosynthesis; CoA from (R)-pantothenate: step 5/5. In terms of biological role, catalyzes the phosphorylation of the 3'-hydroxyl group of dephosphocoenzyme A to form coenzyme A. This Hahella chejuensis (strain KCTC 2396) protein is Dephospho-CoA kinase.